The primary structure comprises 49 residues: DNA-directed RNA polymerase subunit Rpo12 (49 aa).

Residues cysteine 11, cysteine 27, and cysteine 30 each coordinate Zn(2+).

Belongs to the archaeal Rpo12/eukaryotic RPC10 RNA polymerase subunit family. Part of the RNA polymerase complex. Zn(2+) is required as a cofactor.

The protein resides in the cytoplasm. The enzyme catalyses RNA(n) + a ribonucleoside 5'-triphosphate = RNA(n+1) + diphosphate. Its function is as follows. DNA-dependent RNA polymerase (RNAP) catalyzes the transcription of DNA into RNA using the four ribonucleoside triphosphates as substrates. This is DNA-directed RNA polymerase subunit Rpo12 from Thermococcus onnurineus (strain NA1).